A 316-amino-acid chain; its full sequence is Ribosomal protein L11 methyltransferase (316 aa).

Residues threonine 161, glycine 182, aspartate 204, and asparagine 249 each coordinate S-adenosyl-L-methionine.

The protein belongs to the methyltransferase superfamily. PrmA family.

The protein resides in the cytoplasm. It catalyses the reaction L-lysyl-[protein] + 3 S-adenosyl-L-methionine = N(6),N(6),N(6)-trimethyl-L-lysyl-[protein] + 3 S-adenosyl-L-homocysteine + 3 H(+). Methylates ribosomal protein L11. This Ruminiclostridium cellulolyticum (strain ATCC 35319 / DSM 5812 / JCM 6584 / H10) (Clostridium cellulolyticum) protein is Ribosomal protein L11 methyltransferase.